The primary structure comprises 357 residues: Protein RecA (357 aa).

Position 78–85 (78–85 (GPESSGKT)) interacts with ATP.

Belongs to the RecA family.

Its subcellular location is the cytoplasm. Functionally, can catalyze the hydrolysis of ATP in the presence of single-stranded DNA, the ATP-dependent uptake of single-stranded DNA by duplex DNA, and the ATP-dependent hybridization of homologous single-stranded DNAs. It interacts with LexA causing its activation and leading to its autocatalytic cleavage. This is Protein RecA from Cereibacter sphaeroides (strain ATCC 17029 / ATH 2.4.9) (Rhodobacter sphaeroides).